The sequence spans 168 residues: Mesencephalic astrocyte-derived neurotrophic factor homolog (168 aa).

The signal sequence occupies residues 1–17 (MSRLVLLISLVIVVASA). 4 cysteine pairs are disulfide-bonded: Cys-22–Cys-109, Cys-25–Cys-97, Cys-55–Cys-66, and Cys-143–Cys-146.

It belongs to the ARMET family. In terms of tissue distribution, expressed in the intestine, spermatheca and nervous system. Expressed in the hypoderm. Expressed in structures of the excretory system. Not expressed in the male gonad.

It is found in the secreted. The protein resides in the endoplasmic reticulum lumen. In terms of biological role, inhibits endoplasmic reticulum (ER) stress response. Retained in the ER under normal conditions and is up-regulated and secreted by the ER in response to ER stress and hypoxia. Following secretion by the ER, directly binds to 3-O-sulfogalactosylceramide, a lipid sulfatide in the outer cell membrane of target cells. Sulfatide binding promotes its cellular uptake by endocytosis, and is required for its role in alleviating ER stress under ER stress conditions. Has a neuroprotective role, ensuring survival of dopaminergic neurons during normal growth. This chain is Mesencephalic astrocyte-derived neurotrophic factor homolog, found in Caenorhabditis elegans.